The chain runs to 659 residues: Pollen receptor-like kinase 6 (659 aa).

Residues 1–26 form the signal peptide; sequence MAAAVLNPGFFLLILLLSFSISPSLQ. At 27–266 the chain is on the extracellular side; the sequence is YVSESEPLVR…SVPETSNKAA (240 aa). A disulfide bridge links cysteine 58 with cysteine 67. LRR repeat units follow at residues 95–118, 120–142, 143–167, 168–190, and 192–214; these read LPNLKTIRLDNNLLSGPLPHFFKL, GLKSLMLSNNSFSGEIRDDFFKD, MSKLKRLFLDHNKFEGSIPSSITQL, PQLEELHMQSNNLTGEIPPEFGS, and KNLKVLDLSTNSLDGIVPQSIAD. Asparagine 128 carries an N-linked (GlcNAc...) asparagine glycan. N-linked (GlcNAc...) asparagine glycosylation occurs at asparagine 179. N-linked (GlcNAc...) asparagine glycosylation occurs at asparagine 221. Residues 226 to 242 are LURE peptides binding; sequence EYLCGPVVDVGCENIEL. A disulfide bond links cysteine 229 and cysteine 237. The disordered stretch occupies residues 241 to 260; it reads ELNDPQEGQPPSKPSSSVPE. A helical membrane pass occupies residues 267–287; the sequence is INAIMVSISLLLLFFIIVGVI. Residues 288-659 lie on the Cytoplasmic side of the membrane; that stretch reads KRRNKKKNPD…AVRRIEQVKT (372 aa). Positions 312-354 are disordered; it reads VRISESSSTTAKRSTDSSRKRGGHSDDGSTKKGVSNIGKGGNG. A compositionally biased stretch (basic and acidic residues) spans 324–341; the sequence is RSTDSSRKRGGHSDDGST. Residues 384–659 form the Protein kinase domain; sequence KAAAEVLGNG…AVRRIEQVKT (276 aa). ATP is bound by residues 390–398 and lysine 412; that span reads LGNGSLGSA. The residue at position 464 (serine 464) is a Phosphoserine. Threonine 484 and threonine 557 each carry phosphothreonine. A Phosphoserine modification is found at serine 561.

It belongs to the protein kinase superfamily. Ser/Thr protein kinase family. In terms of assembly, interacts with ROPGEF8, ROPGEF9, ROPGEF12, ROPGEF13, PRK3, LIP1 and LIP2. Binds to LURE peptides via its LRR repeats; interacts with LURE1.1, LURE1.2, LURE1.3 and LURE1.4. Expressed specifically in the pollen tube, predominantly at the tip.

It localises to the cell membrane. It is found in the cytoplasmic granule. Key receptor for sensing species-specific attractants in cooperation with other pollen receptor-like kinases. Essential for pollen tube reorientation toward attractant peptides. This Arabidopsis thaliana (Mouse-ear cress) protein is Pollen receptor-like kinase 6.